A 394-amino-acid polypeptide reads, in one-letter code: 1-deoxy-D-xylulose 5-phosphate reductoisomerase (394 aa).

Positions 13, 14, 15, 16, and 127 each coordinate NADPH. Lys128 contributes to the 1-deoxy-D-xylulose 5-phosphate binding site. Position 129 (Glu129) interacts with NADPH. Residue Asp153 participates in Mn(2+) binding. 4 residues coordinate 1-deoxy-D-xylulose 5-phosphate: Ser154, Glu155, Ser184, and His207. Glu155 contacts Mn(2+). Residue Gly213 coordinates NADPH. 1-deoxy-D-xylulose 5-phosphate is bound by residues Ser220, Asn225, Lys226, and Glu229. Glu229 is a Mn(2+) binding site.

The protein belongs to the DXR family. Requires Mg(2+) as cofactor. Mn(2+) serves as cofactor.

The enzyme catalyses 2-C-methyl-D-erythritol 4-phosphate + NADP(+) = 1-deoxy-D-xylulose 5-phosphate + NADPH + H(+). The protein operates within isoprenoid biosynthesis; isopentenyl diphosphate biosynthesis via DXP pathway; isopentenyl diphosphate from 1-deoxy-D-xylulose 5-phosphate: step 1/6. Functionally, catalyzes the NADPH-dependent rearrangement and reduction of 1-deoxy-D-xylulose-5-phosphate (DXP) to 2-C-methyl-D-erythritol 4-phosphate (MEP). The protein is 1-deoxy-D-xylulose 5-phosphate reductoisomerase of Ectopseudomonas mendocina (strain ymp) (Pseudomonas mendocina).